The chain runs to 28 residues: Gamma-conotoxin-like de7a (28 aa).

3 cysteine pairs are disulfide-bonded: Cys2/Cys18, Cys9/Cys22, and Cys17/Cys27. Residue Pro4 is modified to 4-hydroxyproline. Residues Glu13 and Glu16 each carry the 4-carboxyglutamate modification. Ser28 is subject to Serine amide.

This sequence belongs to the conotoxin O1 superfamily. In terms of tissue distribution, expressed by the venom duct.

Its subcellular location is the secreted. Gamma-conotoxins may act on voltage-gated non-specific cation pacemaker channels (HCN). This chain is Gamma-conotoxin-like de7a, found in Conasprella delessertii (Sozon's cone).